We begin with the raw amino-acid sequence, 251 residues long: Dehydration-responsive element-binding protein 1I (251 aa).

The segment at Met1 to Thr50 is disordered. Positions Val54 to Ala114 form a DNA-binding region, AP2/ERF. Residues Ala169–Phe198 are disordered.

This sequence belongs to the AP2/ERF transcription factor family. ERF subfamily.

The protein resides in the nucleus. Transcriptional activator that binds specifically to the DNA sequence 5'-[AG]CCGAC-3'. Binding to the C-repeat/DRE element mediates high salinity- and dehydration-inducible transcription. The protein is Dehydration-responsive element-binding protein 1I (DREB1I) of Oryza sativa subsp. japonica (Rice).